Consider the following 514-residue polypeptide: Adenylosuccinate synthetase 1, chloroplastic (514 aa).

The transit peptide at 1 to 73 directs the protein to the chloroplast; it reads MAMAAAAAVA…AQAIERESVK (73 aa). GTP contacts are provided by residues 100–106 and 128–130; these read GDEGKGK and GHT. The active-site Proton acceptor is the D101. The Mg(2+) site is built by D101 and G128. Residues 101–104, 126–129, T218, R232, Q312, T327, and R391 contribute to the IMP site; these read DEGK and NAGH. The active-site Proton donor is the H129. Position 387-393 (387-393) interacts with substrate; that stretch reads TTTGRPR. GTP-binding positions include R393, 419-421, and 502-504; these read KLD and GVG.

It belongs to the adenylosuccinate synthetase family. Homodimer. Mg(2+) serves as cofactor.

The protein resides in the plastid. It is found in the chloroplast. It carries out the reaction IMP + L-aspartate + GTP = N(6)-(1,2-dicarboxyethyl)-AMP + GDP + phosphate + 2 H(+). The protein operates within purine metabolism; AMP biosynthesis via de novo pathway; AMP from IMP: step 1/2. Functionally, plays an important role in the de novo pathway and in the salvage pathway of purine nucleotide biosynthesis. Catalyzes the first committed step in the biosynthesis of AMP from IMP. The protein is Adenylosuccinate synthetase 1, chloroplastic of Physcomitrium patens (Spreading-leaved earth moss).